The sequence spans 174 residues: Small heat shock protein OV25-1 (174 aa).

In terms of domain architecture, sHSP spans leucine 50 to serine 161. The interval serine 153 to glutamine 174 is disordered. Residues serine 161 to glutamine 174 show a composition bias toward basic and acidic residues.

This sequence belongs to the small heat shock protein (HSP20) family.

In Onchocerca volvulus, this protein is Small heat shock protein OV25-1 (OV25-1).